A 282-amino-acid polypeptide reads, in one-letter code: Parvulin-like PPIase (282 aa).

The first 20 residues, 1 to 20 (MKKLSVIFLSVSMLSGIAFA), serve as a signal peptide directing secretion. The 94-residue stretch at 138–231 (KEQIKVAHIL…FGWHIIKVLE (94 aa)) folds into the PpiC domain.

The protein belongs to the PpiC/parvulin rotamase family.

Its subcellular location is the cell outer membrane. It carries out the reaction [protein]-peptidylproline (omega=180) = [protein]-peptidylproline (omega=0). This chain is Parvulin-like PPIase (plp), found in Rickettsia conorii (strain ATCC VR-613 / Malish 7).